Reading from the N-terminus, the 201-residue chain is Phosphoheptose isomerase 2 (201 aa).

Residues 39–198 (VIKAYKNGNK…EEELFGKGFS (160 aa)) enclose the SIS domain. 54 to 56 (NGG) contributes to the substrate binding site. His63 and Glu67 together coordinate Zn(2+). Substrate-binding positions include Glu67, 96–97 (ND), 122–124 (STS), Ser127, and Gln174. Zn(2+)-binding residues include Gln174 and His182.

Belongs to the SIS family. GmhA subfamily. As to quaternary structure, homotetramer. It depends on Zn(2+) as a cofactor.

The protein localises to the cytoplasm. It catalyses the reaction 2 D-sedoheptulose 7-phosphate = D-glycero-alpha-D-manno-heptose 7-phosphate + D-glycero-beta-D-manno-heptose 7-phosphate. The protein operates within carbohydrate biosynthesis; D-glycero-D-manno-heptose 7-phosphate biosynthesis; D-glycero-alpha-D-manno-heptose 7-phosphate and D-glycero-beta-D-manno-heptose 7-phosphate from sedoheptulose 7-phosphate: step 1/1. It participates in capsule biogenesis; capsule polysaccharide biosynthesis. Functionally, catalyzes the isomerization of sedoheptulose 7-phosphate in D-glycero-D-manno-heptose 7-phosphate. No activity with L-galacto-heptulose, L-galacto-heptulose 7-phosphate or D-manno-heptulose. The polypeptide is Phosphoheptose isomerase 2 (Campylobacter jejuni subsp. jejuni serotype O:2 (strain ATCC 700819 / NCTC 11168)).